The primary structure comprises 309 residues: Tagatose-6-phosphate kinase (309 aa).

The protein belongs to the carbohydrate kinase PfkB family. LacC subfamily.

The enzyme catalyses D-tagatofuranose 6-phosphate + ATP = D-tagatofuranose 1,6-bisphosphate + ADP + H(+). Its pathway is carbohydrate metabolism; D-tagatose 6-phosphate degradation; D-glyceraldehyde 3-phosphate and glycerone phosphate from D-tagatose 6-phosphate: step 1/2. The polypeptide is Tagatose-6-phosphate kinase (Streptococcus pyogenes serotype M5 (strain Manfredo)).